The chain runs to 292 residues: Pyridoxal 5'-phosphate synthase subunit PdxS (292 aa).

D22 contributes to the D-ribose 5-phosphate binding site. K79 acts as the Schiff-base intermediate with D-ribose 5-phosphate in catalysis. G151 provides a ligand contact to D-ribose 5-phosphate. R163 contributes to the D-glyceraldehyde 3-phosphate binding site. D-ribose 5-phosphate-binding positions include G212 and G233–S234.

Belongs to the PdxS/SNZ family. In terms of assembly, in the presence of PdxT, forms a dodecamer of heterodimers.

It carries out the reaction aldehydo-D-ribose 5-phosphate + D-glyceraldehyde 3-phosphate + L-glutamine = pyridoxal 5'-phosphate + L-glutamate + phosphate + 3 H2O + H(+). It participates in cofactor biosynthesis; pyridoxal 5'-phosphate biosynthesis. Functionally, catalyzes the formation of pyridoxal 5'-phosphate from ribose 5-phosphate (RBP), glyceraldehyde 3-phosphate (G3P) and ammonia. The ammonia is provided by the PdxT subunit. Can also use ribulose 5-phosphate and dihydroxyacetone phosphate as substrates, resulting from enzyme-catalyzed isomerization of RBP and G3P, respectively. This chain is Pyridoxal 5'-phosphate synthase subunit PdxS, found in Ruminiclostridium cellulolyticum (strain ATCC 35319 / DSM 5812 / JCM 6584 / H10) (Clostridium cellulolyticum).